We begin with the raw amino-acid sequence, 443 residues long: Ribosomal protein uS12 methylthiotransferase RimO (443 aa).

One can recognise an MTTase N-terminal domain in the interval 5–115 (PNIGFISLGC…VMQHVHKYVP (111 aa)). Positions 14, 50, 79, 147, 151, and 154 each coordinate [4Fe-4S] cluster. A Radical SAM core domain is found at 133–374 (LTPKHYAYLK…MQVQQRISVA (242 aa)). The region spanning 377-443 (QQKIGKTLAI…ADEYDLWGTY (67 aa)) is the TRAM domain.

This sequence belongs to the methylthiotransferase family. RimO subfamily. [4Fe-4S] cluster is required as a cofactor.

The protein localises to the cytoplasm. The enzyme catalyses L-aspartate(89)-[ribosomal protein uS12]-hydrogen + (sulfur carrier)-SH + AH2 + 2 S-adenosyl-L-methionine = 3-methylsulfanyl-L-aspartate(89)-[ribosomal protein uS12]-hydrogen + (sulfur carrier)-H + 5'-deoxyadenosine + L-methionine + A + S-adenosyl-L-homocysteine + 2 H(+). Catalyzes the methylthiolation of an aspartic acid residue of ribosomal protein uS12. The protein is Ribosomal protein uS12 methylthiotransferase RimO of Haemophilus ducreyi (strain 35000HP / ATCC 700724).